The primary structure comprises 101 residues: uncharacterized protein (101 aa).

The N-terminal stretch at 1–25 is a signal peptide; it reads MRKKRLLSRISFSSLFLLCGTLLSA. The N-palmitoyl cysteine moiety is linked to residue Cys26. The S-diacylglycerol cysteine moiety is linked to residue Cys26.

This sequence belongs to the MG439/MG440 family.

It is found in the cell membrane. This is an uncharacterized protein from Mycoplasma pneumoniae (strain ATCC 29342 / M129 / Subtype 1) (Mycoplasmoides pneumoniae).